The sequence spans 393 residues: Probable acetyl-CoA acetyltransferase (393 aa).

The active-site Acyl-thioester intermediate is the C88. Active-site proton acceptor residues include H349 and C379.

Belongs to the thiolase-like superfamily. Thiolase family.

The enzyme catalyses 2 acetyl-CoA = acetoacetyl-CoA + CoA. This Mycobacterium leprae (strain TN) protein is Probable acetyl-CoA acetyltransferase (fadA4).